Consider the following 305-residue polypeptide: Tyrosine recombinase XerC (305 aa).

A Core-binding (CB) domain is found at 4–95 (ISIQELIKQW…TVKNFYKFLE (92 aa)). The Tyr recombinase domain occupies 116-298 (LLPKALSVDD…SIKHLEAVYN (183 aa)). Catalysis depends on residues R159, K182, H250, R253, and H276. Y285 serves as the catalytic O-(3'-phospho-DNA)-tyrosine intermediate.

Belongs to the 'phage' integrase family. XerC subfamily. As to quaternary structure, forms a cyclic heterotetrameric complex composed of two molecules of XerC and two molecules of XerD.

The protein resides in the cytoplasm. Functionally, site-specific tyrosine recombinase, which acts by catalyzing the cutting and rejoining of the recombining DNA molecules. The XerC-XerD complex is essential to convert dimers of the bacterial chromosome into monomers to permit their segregation at cell division. It also contributes to the segregational stability of plasmids. This Rickettsia typhi (strain ATCC VR-144 / Wilmington) protein is Tyrosine recombinase XerC.